A 469-amino-acid chain; its full sequence is ATP synthase subunit beta (469 aa).

153–160 (GGAGVGKT) lines the ATP pocket.

The protein belongs to the ATPase alpha/beta chains family. As to quaternary structure, F-type ATPases have 2 components, CF(1) - the catalytic core - and CF(0) - the membrane proton channel. CF(1) has five subunits: alpha(3), beta(3), gamma(1), delta(1), epsilon(1). CF(0) has three main subunits: a(1), b(2) and c(9-12). The alpha and beta chains form an alternating ring which encloses part of the gamma chain. CF(1) is attached to CF(0) by a central stalk formed by the gamma and epsilon chains, while a peripheral stalk is formed by the delta and b chains.

The protein localises to the cell inner membrane. It catalyses the reaction ATP + H2O + 4 H(+)(in) = ADP + phosphate + 5 H(+)(out). Its function is as follows. Produces ATP from ADP in the presence of a proton gradient across the membrane. The catalytic sites are hosted primarily by the beta subunits. The chain is ATP synthase subunit beta from Pseudothermotoga lettingae (strain ATCC BAA-301 / DSM 14385 / NBRC 107922 / TMO) (Thermotoga lettingae).